The primary structure comprises 181 residues: Probable pyruvoyl-dependent arginine decarboxylase (181 aa).

Pyruvic acid (Ser) is present on serine 43.

It belongs to the PdaD family. Pyruvate is required as a cofactor.

It carries out the reaction L-arginine + H(+) = agmatine + CO2. The sequence is that of Probable pyruvoyl-dependent arginine decarboxylase from Chlorobium luteolum (strain DSM 273 / BCRC 81028 / 2530) (Pelodictyon luteolum).